We begin with the raw amino-acid sequence, 94 residues long: Large ribosomal subunit protein bL28 (94 aa).

The disordered stretch occupies residues 1 to 21 (MARRCEVTGRGTVSGNNVSHS). Positions 11-20 (GTVSGNNVSH) are enriched in polar residues.

Belongs to the bacterial ribosomal protein bL28 family.

The chain is Large ribosomal subunit protein bL28 from Leptospira interrogans serogroup Icterohaemorrhagiae serovar copenhageni (strain Fiocruz L1-130).